Reading from the N-terminus, the 222-residue chain is N-(5'-phosphoribosyl)anthranilate isomerase (222 aa).

The protein belongs to the TrpF family.

The enzyme catalyses N-(5-phospho-beta-D-ribosyl)anthranilate = 1-(2-carboxyphenylamino)-1-deoxy-D-ribulose 5-phosphate. The protein operates within amino-acid biosynthesis; L-tryptophan biosynthesis; L-tryptophan from chorismate: step 3/5. This Rhizobium leguminosarum bv. trifolii (strain WSM2304) protein is N-(5'-phosphoribosyl)anthranilate isomerase.